The following is a 251-amino-acid chain: Aliphatic sulfonates import ATP-binding protein SsuB (251 aa).

Residues 3–231 (VSINEVSKYF…PRNKTSQSFQ (229 aa)) form the ABC transporter domain. 39–46 (GPSGCGKS) is a binding site for ATP.

This sequence belongs to the ABC transporter superfamily. Aliphatic sulfonates importer (TC 3.A.1.17.2) family. The complex is composed of two ATP-binding proteins (SsuB), two transmembrane proteins (SsuC) and a solute-binding protein (SsuA).

Its subcellular location is the cell membrane. It catalyses the reaction ATP + H2O + aliphatic sulfonate-[sulfonate-binding protein]Side 1 = ADP + phosphate + aliphatic sulfonateSide 2 + [sulfonate-binding protein]Side 1.. In terms of biological role, part of the ABC transporter complex SsuABC involved in aliphatic sulfonates import. Responsible for energy coupling to the transport system. This Bacillus thuringiensis subsp. konkukian (strain 97-27) protein is Aliphatic sulfonates import ATP-binding protein SsuB.